The sequence spans 416 residues: MNKQSWLLNLSLLKTHPAFRAVFLARFISIVSLGLLGVAVPVQIQMMTHSTWQVGLSVTLTGGAMFVGLMVGGVLADRYERKKVILLARGTCGIGFIGLCLNALLPEPSLLAIYLLGLWDGFFASLGVTALLAATPALVGRENLMQAGAITMLTVRLGSVISPMIGGLLLATGGVAWNYGLAAAGTFITLLPLLSLPALPPPPQPREHPLKSLLAGFRFLLASPLVGGIALLGGLLTMASAVRVLYPALADNWQMSAAQIGFLYAAIPLGAAIGALTSGKLAHSARPGLLMLLSTLGSFLAIGLFGLMPMWILGVVCLALFGWLSAVSSLLQYTMLQTQTPEAMLGRINGLWTAQNVTGDAIGAALLGGLGAMMTPVASASASGFGLLIIGVLLLLVLVELRHFRQTPPQVTASDS.

Over 1 to 21 (MNKQSWLLNLSLLKTHPAFRA) the chain is Cytoplasmic. A helical membrane pass occupies residues 22–42 (VFLARFISIVSLGLLGVAVPV). Topologically, residues 43 to 55 (QIQMMTHSTWQVG) are periplasmic. A helical membrane pass occupies residues 56-76 (LSVTLTGGAMFVGLMVGGVLA). At 77-83 (DRYERKK) the chain is on the cytoplasmic side. The helical transmembrane segment at 84-104 (VILLARGTCGIGFIGLCLNAL) threads the bilayer. At 105 to 109 (LPEPS) the chain is on the periplasmic side. A helical membrane pass occupies residues 110-130 (LLAIYLLGLWDGFFASLGVTA). At 131-156 (LLAATPALVGRENLMQAGAITMLTVR) the chain is on the cytoplasmic side. Residues 157–177 (LGSVISPMIGGLLLATGGVAW) traverse the membrane as a helical segment. A topological domain (periplasmic) is located at residue N178. A helical transmembrane segment spans residues 179-199 (YGLAAAGTFITLLPLLSLPAL). The Cytoplasmic portion of the chain corresponds to 200–218 (PPPPQPREHPLKSLLAGFR). The helical transmembrane segment at 219–239 (FLLASPLVGGIALLGGLLTMA) threads the bilayer. Residues 240-256 (SAVRVLYPALADNWQMS) are Periplasmic-facing. The helical transmembrane segment at 257-277 (AAQIGFLYAAIPLGAAIGALT) threads the bilayer. Topologically, residues 278–287 (SGKLAHSARP) are cytoplasmic. The chain crosses the membrane as a helical span at residues 288–307 (GLLMLLSTLGSFLAIGLFGL). Topologically, residues 308–313 (MPMWIL) are periplasmic. The chain crosses the membrane as a helical span at residues 314–336 (GVVCLALFGWLSAVSSLLQYTML). Topologically, residues 337–356 (QTQTPEAMLGRINGLWTAQN) are cytoplasmic. A helical membrane pass occupies residues 357–377 (VTGDAIGAALLGGLGAMMTPV). A378 is a topological domain (periplasmic). A helical transmembrane segment spans residues 379–399 (SASASGFGLLIIGVLLLLVLV). The Cytoplasmic segment spans residues 400 to 416 (ELRHFRQTPPQVTASDS).

This sequence belongs to the major facilitator superfamily. EntS (TC 2.A.1.38) family.

The protein localises to the cell inner membrane. Its function is as follows. Component of an export pathway for enterobactin. This chain is Enterobactin exporter EntS, found in Escherichia coli (strain K12 / MC4100 / BW2952).